Consider the following 353-residue polypeptide: Photosystem II protein D1 (353 aa).

Threonine 2 carries the post-translational modification N-acetylthreonine. Threonine 2 is modified (phosphothreonine). A run of 3 helical transmembrane segments spans residues 29 to 46 (YIGW…TATS), 118 to 133 (HFLL…EWEL), and 142 to 156 (WIAV…AATA). Chlorophyll a is bound at residue histidine 118. Tyrosine 126 serves as a coordination point for pheophytin a. The [CaMn4O5] cluster site is built by aspartate 170 and glutamate 189. Residues 197–218 (FHMLGVAGVFGGSLFSAMHGSL) form a helical membrane-spanning segment. Histidine 198 lines the chlorophyll a pocket. A quinone contacts are provided by residues histidine 215 and 264–265 (SF). Histidine 215 provides a ligand contact to Fe cation. Histidine 272 serves as a coordination point for Fe cation. A helical membrane pass occupies residues 274-288 (FLAAWPVIGIWFTAL). Residues histidine 332, glutamate 333, aspartate 342, and alanine 344 each contribute to the [CaMn4O5] cluster site. Positions 345 to 353 (AVEAPSTNG) are excised as a propeptide.

The protein belongs to the reaction center PufL/M/PsbA/D family. In terms of assembly, PSII is composed of 1 copy each of membrane proteins PsbA, PsbB, PsbC, PsbD, PsbE, PsbF, PsbH, PsbI, PsbJ, PsbK, PsbL, PsbM, PsbT, PsbX, PsbY, PsbZ, Psb30/Ycf12, at least 3 peripheral proteins of the oxygen-evolving complex and a large number of cofactors. It forms dimeric complexes. It depends on The D1/D2 heterodimer binds P680, chlorophylls that are the primary electron donor of PSII, and subsequent electron acceptors. It shares a non-heme iron and each subunit binds pheophytin, quinone, additional chlorophylls, carotenoids and lipids. D1 provides most of the ligands for the Mn4-Ca-O5 cluster of the oxygen-evolving complex (OEC). There is also a Cl(-1) ion associated with D1 and D2, which is required for oxygen evolution. The PSII complex binds additional chlorophylls, carotenoids and specific lipids. as a cofactor. Post-translationally, tyr-161 forms a radical intermediate that is referred to as redox-active TyrZ, YZ or Y-Z. In terms of processing, C-terminally processed by CTPA; processing is essential to allow assembly of the oxygen-evolving complex and thus photosynthetic growth.

The protein resides in the plastid. It is found in the chloroplast thylakoid membrane. It catalyses the reaction 2 a plastoquinone + 4 hnu + 2 H2O = 2 a plastoquinol + O2. Functionally, photosystem II (PSII) is a light-driven water:plastoquinone oxidoreductase that uses light energy to abstract electrons from H(2)O, generating O(2) and a proton gradient subsequently used for ATP formation. It consists of a core antenna complex that captures photons, and an electron transfer chain that converts photonic excitation into a charge separation. The D1/D2 (PsbA/PsbD) reaction center heterodimer binds P680, the primary electron donor of PSII as well as several subsequent electron acceptors. This Buxus microphylla (Littleleaf boxwood) protein is Photosystem II protein D1.